A 153-amino-acid chain; its full sequence is Hydrogenase expression/formation protein HoxT (153 aa).

It belongs to the HupJ family.

The sequence is that of Hydrogenase expression/formation protein HoxT (hoxT) from Azotobacter vinelandii.